The following is a 758-amino-acid chain: 5-methyltetrahydropteroyltriglutamate--homocysteine methyltransferase (758 aa).

5-methyltetrahydropteroyltri-L-glutamate-binding positions include 17–20 and lysine 110; that span reads RELK. Residues 428-430 and glutamate 481 each bind L-homocysteine; that span reads IGS. Residues 428 to 430 and glutamate 481 each bind L-methionine; that span reads IGS. Residues 512 to 513 and tryptophan 558 contribute to the 5-methyltetrahydropteroyltri-L-glutamate site; that span reads RC. Aspartate 596 provides a ligand contact to L-homocysteine. Residue aspartate 596 coordinates L-methionine. Glutamate 602 is a 5-methyltetrahydropteroyltri-L-glutamate binding site. Residues histidine 638, cysteine 640, and glutamate 662 each contribute to the Zn(2+) site. The Proton donor role is filled by histidine 691. Zn(2+) is bound at residue cysteine 723.

The protein belongs to the vitamin-B12 independent methionine synthase family. It depends on Zn(2+) as a cofactor.

The catalysed reaction is 5-methyltetrahydropteroyltri-L-glutamate + L-homocysteine = tetrahydropteroyltri-L-glutamate + L-methionine. It functions in the pathway amino-acid biosynthesis; L-methionine biosynthesis via de novo pathway; L-methionine from L-homocysteine (MetE route): step 1/1. Its function is as follows. Catalyzes the transfer of a methyl group from 5-methyltetrahydrofolate to homocysteine resulting in methionine formation. This chain is 5-methyltetrahydropteroyltriglutamate--homocysteine methyltransferase, found in Thermosynechococcus vestitus (strain NIES-2133 / IAM M-273 / BP-1).